Here is a 254-residue protein sequence, read N- to C-terminus: Ribosomal RNA small subunit methyltransferase J (254 aa).

S-adenosyl-L-methionine-binding positions include arginine 107–aspartate 108, glutamate 123–arginine 124, and aspartate 177.

Belongs to the methyltransferase superfamily. RsmJ family.

Its subcellular location is the cytoplasm. The enzyme catalyses guanosine(1516) in 16S rRNA + S-adenosyl-L-methionine = N(2)-methylguanosine(1516) in 16S rRNA + S-adenosyl-L-homocysteine + H(+). Its function is as follows. Specifically methylates the guanosine in position 1516 of 16S rRNA. The chain is Ribosomal RNA small subunit methyltransferase J from Histophilus somni (strain 129Pt) (Haemophilus somnus).